The following is a 622-amino-acid chain: Membrane protein insertase YidC (622 aa).

Residues Phe6–Leu26 form a helical membrane-spanning segment. The disordered stretch occupies residues Ala37–Ser71. A run of 4 helical transmembrane segments spans residues Leu413–Phe433, Leu483–Phe503, Met513–Phe533, and Val579–Trp599.

The protein belongs to the OXA1/ALB3/YidC family. Type 1 subfamily. Interacts with the Sec translocase complex via SecD. Specifically interacts with transmembrane segments of nascent integral membrane proteins during membrane integration.

The protein resides in the cell inner membrane. Its function is as follows. Required for the insertion and/or proper folding and/or complex formation of integral membrane proteins into the membrane. Involved in integration of membrane proteins that insert both dependently and independently of the Sec translocase complex, as well as at least some lipoproteins. Aids folding of multispanning membrane proteins. The protein is Membrane protein insertase YidC of Treponema pallidum (strain Nichols).